We begin with the raw amino-acid sequence, 949 residues long: Insulin receptor substrate 1 (949 aa).

The PH domain maps to 8–109; the sequence is GMALSGYLKK…WLDKLLVLQR (102 aa). Residues 122-236 enclose the IRS-type PTB domain; sequence YDQVWQVVIQ…SAMSAKTESN (115 aa). Residues 247–270 form a disordered region; sequence PDLSHEPMRKRSSSANEASKPINV. Phosphoserine is present on residues Ser-286, Ser-287, and Ser-342. Positions 304 to 345 are enriched in polar residues; it reads RNGTLSESSNQTYFGSNHGLRSNTISGNRPHSTNKHSNSPTF. Residues 304–373 are disordered; the sequence is RNGTLSESSN…SDDNGSYSHY (70 aa). Tyr-410 bears the Phosphotyrosine; by INSR mark. Positions 410-413 match the YXXM motif 1 motif; sequence YIPM. The tract at residues 530 to 556 is disordered; it reads RSQSSITKEGSGYGTSGNRQKKSTSAP. At Ser-554 the chain carries Phosphoserine. The YXXM motif 2 signature appears at 640-643; sequence YLEM. The segment covering 696–706 has biased composition (basic and acidic residues); the sequence is REQTTSEEKKS. A disordered region spans residues 696-718; sequence REQTTSEEKKSNSPLNEKPFSLK. A Phosphotyrosine; by INSR modification is found at Tyr-892. A disordered region spans residues 906–949; the sequence is AKYLKRGSRESPPVSACPEDGNTYAKIDFDQSDSSSSSSNIFNT. Ser-913 and Ser-916 each carry phosphoserine. Tyr-929 is subject to Phosphotyrosine; by INSR. The span at 937 to 949 shows a compositional bias: low complexity; sequence SDSSSSSSNIFNT.

In terms of assembly, bindings to phosphatidylinositol 3-kinase and SHP2.

Activates phosphatidylinositol 3-kinase when bound to the regulatory p85 subunit. May mediate the control of various cellular processes by insulin-like peptides. When phosphorylated by the insulin receptor binds specifically to various cellular proteins containing SH2 domains. Involved in control of cell proliferation, cell size, and body and organ growth throughout development. Also has a role in a signaling pathway controlling the physiological response required to endure periods of low nutrient conditions. Insulin/insulin-like growth factor (IGF) signaling pathway has a role in regulating aging and is necessary in the ovary for vitellogenic maturation. This chain is Insulin receptor substrate 1, found in Drosophila yakuba (Fruit fly).